Reading from the N-terminus, the 128-residue chain is Large ribosomal subunit protein uL22 (128 aa).

Belongs to the universal ribosomal protein uL22 family. Part of the 50S ribosomal subunit.

In terms of biological role, this protein binds specifically to 23S rRNA; its binding is stimulated by other ribosomal proteins, e.g. L4, L17, and L20. It is important during the early stages of 50S assembly. It makes multiple contacts with different domains of the 23S rRNA in the assembled 50S subunit and ribosome. The globular domain of the protein is located near the polypeptide exit tunnel on the outside of the subunit, while an extended beta-hairpin is found that lines the wall of the exit tunnel in the center of the 70S ribosome. The sequence is that of Large ribosomal subunit protein uL22 from Rhodopseudomonas palustris (strain BisA53).